We begin with the raw amino-acid sequence, 32 residues long: Photosystem II reaction center protein Z (32 aa).

A helical membrane pass occupies residues 9-29; the sequence is IIFSGSLIWVFLLIIVGFLNY.

Belongs to the PsbZ family. As to quaternary structure, PSII is composed of 1 copy each of membrane proteins PsbA, PsbB, PsbC, PsbD, PsbE, PsbF, PsbH, PsbI, PsbJ, PsbK, PsbL, PsbM, PsbT, PsbY, PsbZ, Psb30/Ycf12, at least 3 peripheral proteins of the oxygen-evolving complex and a large number of cofactors. It forms dimeric complexes.

It localises to the plastid. Its subcellular location is the chloroplast thylakoid membrane. May control the interaction of photosystem II (PSII) cores with the light-harvesting antenna, regulates electron flow through the 2 photosystem reaction centers. PSII is a light-driven water plastoquinone oxidoreductase, using light energy to abstract electrons from H(2)O, generating a proton gradient subsequently used for ATP formation. In Euglena myxocylindracea, this protein is Photosystem II reaction center protein Z.